The primary structure comprises 404 residues: Adenosylhomocysteinase (404 aa).

Residues Asp-114 and Glu-139 each coordinate substrate. An NAD(+)-binding site is contributed by 140-142 (TTT). 2 residues coordinate substrate: Lys-169 and Asp-173. Residues Asn-174, 203–208 (GYGWCG), Glu-226, Asn-261, 282–284 (AGH), and Asn-329 each bind NAD(+).

Belongs to the adenosylhomocysteinase family. Requires NAD(+) as cofactor.

The protein localises to the cytoplasm. The enzyme catalyses S-adenosyl-L-homocysteine + H2O = L-homocysteine + adenosine. It participates in amino-acid biosynthesis; L-homocysteine biosynthesis; L-homocysteine from S-adenosyl-L-homocysteine: step 1/1. Functionally, may play a key role in the regulation of the intracellular concentration of adenosylhomocysteine. The polypeptide is Adenosylhomocysteinase (Thermotoga maritima (strain ATCC 43589 / DSM 3109 / JCM 10099 / NBRC 100826 / MSB8)).